The primary structure comprises 359 residues: Phosphate acyltransferase (359 aa).

The disordered stretch occupies residues leucine 338–alanine 359.

It belongs to the PlsX family. As to quaternary structure, homodimer. Probably interacts with PlsY.

The protein localises to the cytoplasm. It carries out the reaction a fatty acyl-[ACP] + phosphate = an acyl phosphate + holo-[ACP]. It functions in the pathway lipid metabolism; phospholipid metabolism. Functionally, catalyzes the reversible formation of acyl-phosphate (acyl-PO(4)) from acyl-[acyl-carrier-protein] (acyl-ACP). This enzyme utilizes acyl-ACP as fatty acyl donor, but not acyl-CoA. This is Phosphate acyltransferase from Anaeromyxobacter sp. (strain Fw109-5).